The primary structure comprises 213 residues: Imidazoleglycerol-phosphate dehydratase (213 aa).

It belongs to the imidazoleglycerol-phosphate dehydratase family.

The protein localises to the cytoplasm. The enzyme catalyses D-erythro-1-(imidazol-4-yl)glycerol 3-phosphate = 3-(imidazol-4-yl)-2-oxopropyl phosphate + H2O. The protein operates within amino-acid biosynthesis; L-histidine biosynthesis; L-histidine from 5-phospho-alpha-D-ribose 1-diphosphate: step 6/9. This is Imidazoleglycerol-phosphate dehydratase from Trichodesmium erythraeum (strain IMS101).